Reading from the N-terminus, the 340-residue chain is tRNA N6-adenosine threonylcarbamoyltransferase (340 aa).

Residues His113 and His117 each contribute to the Fe cation site. Substrate contacts are provided by residues 135–139 (LVSGG), Asp169, Gly182, Asp186, and Asn274. Asp302 provides a ligand contact to Fe cation.

Belongs to the KAE1 / TsaD family. Fe(2+) serves as cofactor.

The protein resides in the cytoplasm. The catalysed reaction is L-threonylcarbamoyladenylate + adenosine(37) in tRNA = N(6)-L-threonylcarbamoyladenosine(37) in tRNA + AMP + H(+). Functionally, required for the formation of a threonylcarbamoyl group on adenosine at position 37 (t(6)A37) in tRNAs that read codons beginning with adenine. Is involved in the transfer of the threonylcarbamoyl moiety of threonylcarbamoyl-AMP (TC-AMP) to the N6 group of A37, together with TsaE and TsaB. TsaD likely plays a direct catalytic role in this reaction. In Mycobacterium sp. (strain KMS), this protein is tRNA N6-adenosine threonylcarbamoyltransferase.